The primary structure comprises 200 residues: NADH-quinone oxidoreductase subunit C (200 aa).

The protein belongs to the complex I 30 kDa subunit family. NDH-1 is composed of 14 different subunits. Subunits NuoB, C, D, E, F, and G constitute the peripheral sector of the complex.

The protein resides in the cell inner membrane. The enzyme catalyses a quinone + NADH + 5 H(+)(in) = a quinol + NAD(+) + 4 H(+)(out). Its function is as follows. NDH-1 shuttles electrons from NADH, via FMN and iron-sulfur (Fe-S) centers, to quinones in the respiratory chain. The immediate electron acceptor for the enzyme in this species is believed to be ubiquinone. Couples the redox reaction to proton translocation (for every two electrons transferred, four hydrogen ions are translocated across the cytoplasmic membrane), and thus conserves the redox energy in a proton gradient. The sequence is that of NADH-quinone oxidoreductase subunit C from Burkholderia thailandensis (strain ATCC 700388 / DSM 13276 / CCUG 48851 / CIP 106301 / E264).